The primary structure comprises 209 residues: Probable glutathione peroxidase 8-B (209 aa).

A helical transmembrane segment spans residues 18–40 (VFLVFFSMVLCTGILCVLQLKFL). Cys79 is an active-site residue.

Belongs to the glutathione peroxidase family.

Its subcellular location is the membrane. It catalyses the reaction 2 glutathione + H2O2 = glutathione disulfide + 2 H2O. This is Probable glutathione peroxidase 8-B (gpx8-b) from Xenopus laevis (African clawed frog).